The primary structure comprises 809 residues: MRRALRLLPLPLSIAICLPAMAADKPLNWGLCPAVDPLPGFDGAPAADPKAAEMRQQLPTDIEGDQLSGTSTTPQYQGNVALKRGDQFLGADNLRMDTETGNYIAEGNVRYQDTSFRMVADRAEGNQDTDTHKVTNIQYQLVERRGNGDAESVDLQGQVGQMHRSTYTTCDPSQPIWRVRAPEIDVDNEEGFGTARNAVLQIGKVPVLYFPWFKFPIDDRRQTGLLFPQFGLSGRNGFDYLQPIYLNLAPNYDATLLPRYMSKRGFMFGTEFRYLYEGGRGEVTGNYLPNDKLRDKDRGSVFYSGYHNVNSNWQARSSISWVSDTRYVEDFTSRINGMGSASSLQSTVGIYGTGETWTAGLMADRWQLTDYTLDEQALPYNRQPRAYFTWEKPLGIFEAGIYAEAVRFTHDDSYFVRPPISGSSRDDNEDEYVRTNIRNKQYGSGARLDVKPYISMPLSGAAWFLTPTVAWRYTAYQLDSTLADTAPLTGNRTPTRSLPIASLDAGLYFDRETSLFGTNYLNTLEPRMYYLYVPYRDQDDLPVFDTRPFTFSYGQLFRDTRYTGADRQNDANQLTLAVTSRWLRQDDGREKLSLSAGQILYFSDSLVTINNSNNSAAGSEQTVEQGKSAWVADANYMINDRWSMGATYQWNPNSRKEDLASLRTRYLLNNDGIINLAYRYRRNLTDNSDQLKQADFSFLYPINPSWSAVGRYYYSLLDRKPLEIIGGVQWDSCCLAVRGLVRRFVRNRDGEMDNSIQIEFVLKGLSSFGQNTDRTLRRAILGYYRDDLYLVPPSNTTTNPDDYDPNLIP.

A signal peptide spans 1–22 (MRRALRLLPLPLSIAICLPAMA).

This sequence belongs to the LptD family. In terms of assembly, component of the lipopolysaccharide transport and assembly complex. Interacts with LptE and LptA.

The protein localises to the cell outer membrane. Functionally, together with LptE, is involved in the assembly of lipopolysaccharide (LPS) at the surface of the outer membrane. The chain is LPS-assembly protein LptD from Xanthomonas euvesicatoria pv. vesicatoria (strain 85-10) (Xanthomonas campestris pv. vesicatoria).